The chain runs to 256 residues: Ubiquinone/menaquinone biosynthesis C-methyltransferase UbiE (256 aa).

S-adenosyl-L-methionine contacts are provided by residues Thr79, Asp100, and Asp128–Ala129.

Belongs to the class I-like SAM-binding methyltransferase superfamily. MenG/UbiE family.

The enzyme catalyses a 2-demethylmenaquinol + S-adenosyl-L-methionine = a menaquinol + S-adenosyl-L-homocysteine + H(+). The catalysed reaction is a 2-methoxy-6-(all-trans-polyprenyl)benzene-1,4-diol + S-adenosyl-L-methionine = a 5-methoxy-2-methyl-3-(all-trans-polyprenyl)benzene-1,4-diol + S-adenosyl-L-homocysteine + H(+). It participates in quinol/quinone metabolism; menaquinone biosynthesis; menaquinol from 1,4-dihydroxy-2-naphthoate: step 2/2. Its pathway is cofactor biosynthesis; ubiquinone biosynthesis. Functionally, methyltransferase required for the conversion of demethylmenaquinol (DMKH2) to menaquinol (MKH2) and the conversion of 2-polyprenyl-6-methoxy-1,4-benzoquinol (DDMQH2) to 2-polyprenyl-3-methyl-6-methoxy-1,4-benzoquinol (DMQH2). The sequence is that of Ubiquinone/menaquinone biosynthesis C-methyltransferase UbiE from Ectopseudomonas mendocina (strain ymp) (Pseudomonas mendocina).